A 287-amino-acid chain; its full sequence is tRNA pseudouridine synthase B (287 aa).

Residue Asp-37 is the Nucleophile of the active site.

This sequence belongs to the pseudouridine synthase TruB family. Type 1 subfamily.

It carries out the reaction uridine(55) in tRNA = pseudouridine(55) in tRNA. Responsible for synthesis of pseudouridine from uracil-55 in the psi GC loop of transfer RNAs. This is tRNA pseudouridine synthase B from Caldicellulosiruptor saccharolyticus (strain ATCC 43494 / DSM 8903 / Tp8T 6331).